A 305-amino-acid polypeptide reads, in one-letter code: Large ribosomal subunit protein uL2m (305 aa).

Residues Met1–Asn60 constitute a mitochondrion transit peptide. Residues Arg264–Gly283 form a disordered region. The segment covering Arg274–Gly283 has biased composition (basic residues).

This sequence belongs to the universal ribosomal protein uL2 family. Component of the mitochondrial large ribosomal subunit (mt-LSU). Mature mammalian 55S mitochondrial ribosomes consist of a small (28S) and a large (39S) subunit. The 28S small subunit contains a 12S ribosomal RNA (12S mt-rRNA) and 30 different proteins. The 39S large subunit contains a 16S rRNA (16S mt-rRNA), a copy of mitochondrial valine transfer RNA (mt-tRNA(Val)), which plays an integral structural role, and 52 different proteins.

It localises to the mitochondrion. The protein is Large ribosomal subunit protein uL2m (MRPL2) of Homo sapiens (Human).